A 339-amino-acid chain; its full sequence is NADH-quinone oxidoreductase subunit H (339 aa).

9 consecutive transmembrane segments (helical) span residues 9 to 29 (IFPLIIIALKVVAITIPLILC), 50 to 70 (PNVVGPFGLLQPIADAVKLLF), 82 to 102 (ILFVLAPMITFILSLIGWAVI), 115 to 135 (VGVLYILAISSLSVYGIIIAG), 161 to 181 (MGLVIITVLLTTGTLNLSQIV), 187 to 207 (MPWWIDLMLMPMGVVFFISVL), 235 to 255 (MGFALFFLGEYANMILVSAMT), 275 to 295 (IPGFFWFVFKVGFLLFCFLWI), and 311 to 331 (GWKVFLPLTLFWVVLVSSVLI).

Belongs to the complex I subunit 1 family. As to quaternary structure, NDH-1 is composed of 14 different subunits. Subunits NuoA, H, J, K, L, M, N constitute the membrane sector of the complex.

The protein resides in the cell inner membrane. It catalyses the reaction a quinone + NADH + 5 H(+)(in) = a quinol + NAD(+) + 4 H(+)(out). Its function is as follows. NDH-1 shuttles electrons from NADH, via FMN and iron-sulfur (Fe-S) centers, to quinones in the respiratory chain. The immediate electron acceptor for the enzyme in this species is believed to be ubiquinone. Couples the redox reaction to proton translocation (for every two electrons transferred, four hydrogen ions are translocated across the cytoplasmic membrane), and thus conserves the redox energy in a proton gradient. This subunit may bind ubiquinone. In Rickettsia bellii (strain RML369-C), this protein is NADH-quinone oxidoreductase subunit H.